The sequence spans 342 residues: 4-hydroxy-2-oxovalerate aldolase (342 aa).

Positions Ile8 to Gln260 constitute a Pyruvate carboxyltransferase domain. Arg16–Asp17 contributes to the substrate binding site. Residue Asp17 participates in Mn(2+) binding. His20 acts as the Proton acceptor in catalysis. Residues Ser170 and His199 each coordinate substrate. Mn(2+) contacts are provided by His199 and His201. Tyr290 is a substrate binding site.

It belongs to the 4-hydroxy-2-oxovalerate aldolase family.

The catalysed reaction is (S)-4-hydroxy-2-oxopentanoate = acetaldehyde + pyruvate. The chain is 4-hydroxy-2-oxovalerate aldolase from Albidiferax ferrireducens (strain ATCC BAA-621 / DSM 15236 / T118) (Rhodoferax ferrireducens).